A 225-amino-acid polypeptide reads, in one-letter code: 7-cyano-7-deazaguanine synthase (225 aa).

Residue 10 to 20 coordinates ATP; the sequence is FSGGQDSTTLA. The Zn(2+) site is built by cysteine 190, cysteine 205, cysteine 208, and cysteine 211.

The protein belongs to the QueC family. Zn(2+) is required as a cofactor.

The catalysed reaction is 7-carboxy-7-deazaguanine + NH4(+) + ATP = 7-cyano-7-deazaguanine + ADP + phosphate + H2O + H(+). The protein operates within purine metabolism; 7-cyano-7-deazaguanine biosynthesis. Its function is as follows. Catalyzes the ATP-dependent conversion of 7-carboxy-7-deazaguanine (CDG) to 7-cyano-7-deazaguanine (preQ(0)). This Helicobacter acinonychis (strain Sheeba) protein is 7-cyano-7-deazaguanine synthase.